The chain runs to 102 residues: Large ribosomal subunit protein uL24 (102 aa).

It belongs to the universal ribosomal protein uL24 family. In terms of assembly, part of the 50S ribosomal subunit.

Functionally, one of two assembly initiator proteins, it binds directly to the 5'-end of the 23S rRNA, where it nucleates assembly of the 50S subunit. In terms of biological role, one of the proteins that surrounds the polypeptide exit tunnel on the outside of the subunit. The polypeptide is Large ribosomal subunit protein uL24 (Rhizobium rhizogenes (strain K84 / ATCC BAA-868) (Agrobacterium radiobacter)).